The primary structure comprises 414 residues: Putative F-box/kelch-repeat protein At2g29800 (414 aa).

Residues 1 to 61 form a disordered region; sequence MASISETSDD…EVENVPPIPR (61 aa). Positions 20-35 are enriched in basic and acidic residues; the sequence is KPEEPHKNPQEEKENQ. Over residues 40–54 the composition is skewed to acidic residues; that stretch reads NEADEEDDHQDEEVE. The 48-residue stretch at 58–105 folds into the F-box domain; the sequence is PIPRKIPPVLIENTIAPLRRCHYPKLSLLSNAFRQVISSEDLFQVRSL. Kelch repeat units lie at residues 163 to 211, 212 to 258, 263 to 302, and 305 to 349; these read KIYV…VIDG, RIYV…IVHV, KIYI…SCVV, and LLYA…SKMA.

The polypeptide is Putative F-box/kelch-repeat protein At2g29800 (Arabidopsis thaliana (Mouse-ear cress)).